A 218-amino-acid polypeptide reads, in one-letter code: 7-cyano-7-deazaguanine synthase (218 aa).

9–19 contributes to the ATP binding site; it reads FSGGMDSFTVL. Positions 185, 193, 196, and 199 each coordinate Zn(2+).

This sequence belongs to the QueC family. Zn(2+) is required as a cofactor.

The catalysed reaction is 7-carboxy-7-deazaguanine + NH4(+) + ATP = 7-cyano-7-deazaguanine + ADP + phosphate + H2O + H(+). It participates in purine metabolism; 7-cyano-7-deazaguanine biosynthesis. Functionally, catalyzes the ATP-dependent conversion of 7-carboxy-7-deazaguanine (CDG) to 7-cyano-7-deazaguanine (preQ(0)). The protein is 7-cyano-7-deazaguanine synthase of Pseudoalteromonas atlantica (strain T6c / ATCC BAA-1087).